The primary structure comprises 372 residues: Lipoyl synthase (372 aa).

Residues Cys-37, Cys-42, Cys-48, Cys-63, Cys-67, Cys-70, and Ser-292 each contribute to the [4Fe-4S] cluster site. A Radical SAM core domain is found at 49–281 (WREGTATVML…ERAALEMGFL (233 aa)). The disordered stretch occupies residues 338 to 372 (LTAELDPDEPRPPVAPAPASASPARLVPAASLIRR). Positions 354–372 (APASASPARLVPAASLIRR) are enriched in low complexity.

This sequence belongs to the radical SAM superfamily. Lipoyl synthase family. Requires [4Fe-4S] cluster as cofactor.

It is found in the cytoplasm. The catalysed reaction is [[Fe-S] cluster scaffold protein carrying a second [4Fe-4S](2+) cluster] + N(6)-octanoyl-L-lysyl-[protein] + 2 oxidized [2Fe-2S]-[ferredoxin] + 2 S-adenosyl-L-methionine + 4 H(+) = [[Fe-S] cluster scaffold protein] + N(6)-[(R)-dihydrolipoyl]-L-lysyl-[protein] + 4 Fe(3+) + 2 hydrogen sulfide + 2 5'-deoxyadenosine + 2 L-methionine + 2 reduced [2Fe-2S]-[ferredoxin]. Its pathway is protein modification; protein lipoylation via endogenous pathway; protein N(6)-(lipoyl)lysine from octanoyl-[acyl-carrier-protein]: step 2/2. Functionally, catalyzes the radical-mediated insertion of two sulfur atoms into the C-6 and C-8 positions of the octanoyl moiety bound to the lipoyl domains of lipoate-dependent enzymes, thereby converting the octanoylated domains into lipoylated derivatives. This is Lipoyl synthase from Sorangium cellulosum (strain So ce56) (Polyangium cellulosum (strain So ce56)).